The chain runs to 459 residues: 2-(3-amino-3-carboxypropyl)histidine synthase subunit 1 (459 aa).

The tract at residues 1-68 (MEDDRAQVDL…AGANTSIEDS (68 aa)) is disordered. Low complexity predominate over residues 41–61 (SAAAGKSSSSSSNSTSQPAGA). Cys-165, Cys-268, and Cys-403 together coordinate [4Fe-4S] cluster.

It belongs to the DPH1/DPH2 family. DPH1 subfamily. Component of the 2-(3-amino-3-carboxypropyl)histidine synthase complex composed of dph-1, dph-2, dph-3 and a NADH-dependent reductase, predominantly cbr-1. [4Fe-4S] cluster serves as cofactor.

Its subcellular location is the cytoplasm. The catalysed reaction is L-histidyl-[translation elongation factor 2] + S-adenosyl-L-methionine = 2-[(3S)-amino-3-carboxypropyl]-L-histidyl-[translation elongation factor 2] + S-methyl-5'-thioadenosine + H(+). Its pathway is protein modification; peptidyl-diphthamide biosynthesis. In terms of biological role, catalyzes the first step of diphthamide biosynthesis, a post-translational modification of histidine which occurs in elongation factor 2. Dph-1 and dph-2 transfer a 3-amino-3-carboxypropyl (ACP) group from S-adenosyl-L-methionine (SAM) to a histidine residue, the reaction is assisted by a reduction system comprising dph-3 and a NADH-dependent reductase, predominantly cbr-1. The chain is 2-(3-amino-3-carboxypropyl)histidine synthase subunit 1 (dph-1) from Neurospora crassa (strain ATCC 24698 / 74-OR23-1A / CBS 708.71 / DSM 1257 / FGSC 987).